The primary structure comprises 469 residues: Abscisic acid 8'-hydroxylase CYP707A2 (469 aa).

The chain crosses the membrane as a helical span at residues 3–23 (FVSMLCLFTFISLTLLLIHSI). Residue Cys414 coordinates heme.

The protein belongs to the cytochrome P450 family. Heme serves as cofactor. Expressed at low levels in fruit.

Its subcellular location is the membrane. The enzyme catalyses 2-cis-(+)-abscisate + reduced [NADPH--hemoprotein reductase] + O2 = (+)-8'-hydroxyabscisate + oxidized [NADPH--hemoprotein reductase] + H2O + H(+). Its pathway is plant hormone degradation; abscisic acid degradation. Negative regulator of fruit ripening involved in the oxidative degradation of abscisic acid (ABA). The sequence is that of Abscisic acid 8'-hydroxylase CYP707A2 from Solanum lycopersicum (Tomato).